Reading from the N-terminus, the 548-residue chain is ComP-specific O-oligosaccharyltransferase (548 aa).

Helical transmembrane passes span 8 to 28 (IKNY…IIPN), 32 to 52 (LSST…LLTV), 68 to 88 (WFLF…IYFF), 91 to 111 (FFFS…GFNE), 119 to 139 (IVKK…LIAI), 164 to 184 (LGQP…LCYL), 189 to 209 (SLNN…NVMT), 213 to 233 (SAWI…QKKI), 239 to 259 (IFFN…FNLI), 331 to 351 (MLWN…CFLI), 363 to 383 (LFLF…YPFA), and 418 to 438 (TLFL…VLDI).

This sequence belongs to the PglL O-oligosaccharyltransferase family.

The protein resides in the cell membrane. Functionally, specifically catalyzes the glycosylation of the pilin-like competence factor ComP. The chain is ComP-specific O-oligosaccharyltransferase from Acinetobacter baylyi (strain ATCC 33305 / BD413 / ADP1).